Reading from the N-terminus, the 757-residue chain is Double zinc ribbon and ankyrin repeat-containing protein 1 (757 aa).

DZANK-type zinc fingers lie at residues C230–E290 and C359–G407. ANK repeat units lie at residues E631–C662 and Q666–Q695.

Interacts with NINL. Associates with DYNC1H1 and multiple dynein intermediate and light chains as well as actin-binding proteins. As to expression, expressed in retina.

The protein localises to the cell projection. It is found in the cilium. Functionally, involved in vesicle transport in photoreceptor cells. This chain is Double zinc ribbon and ankyrin repeat-containing protein 1, found in Rattus norvegicus (Rat).